The sequence spans 97 residues: Protein E7 (97 aa).

Residues 1–40 (MRGHKPTLKEYVLDLYPEPTDLYCYEQLSDSSDEDEGLDR) are E7 terminal domain. An LXCXE motif; interaction with host RB1 and TMEM173/STING motif is present at residues 22–26 (LYCYE). Residues 58-94 (CHTCNTTVRLCVNSTASDLRTIQQLLMGTVNIVCPTC) fold into a zinc finger. The short motif at 76–84 (LRTIQQLLM) is the Nuclear export signal element.

Belongs to the papillomaviridae E7 protein family. Homodimer. Homooligomer. Interacts with host RB1; this interaction induces dissociation of RB1-E2F1 complex thereby disrupting RB1 activity. Interacts with host EP300; this interaction represses EP300 transcriptional activity. Interacts with protein E2; this interaction inhibits E7 oncogenic activity. Interacts with host TMEM173/STING; this interaction impairs the ability of TMEM173/STING to sense cytosolic DNA and promote the production of type I interferon (IFN-alpha and IFN-beta). Highly phosphorylated.

The protein localises to the host cytoplasm. It is found in the host nucleus. Functionally, plays a role in viral genome replication by driving entry of quiescent cells into the cell cycle. Stimulation of progression from G1 to S phase allows the virus to efficiently use the cellular DNA replicating machinery to achieve viral genome replication. E7 protein has both transforming and trans-activating activities. Induces the disassembly of the E2F1 transcription factor from RB1, with subsequent transcriptional activation of E2F1-regulated S-phase genes. Interferes with host histone deacetylation mediated by HDAC1 and HDAC2, leading to transcription activation. Also plays a role in the inhibition of both antiviral and antiproliferative functions of host interferon alpha. Interaction with host TMEM173/STING impairs the ability of TMEM173/STING to sense cytosolic DNA and promote the production of type I interferon (IFN-alpha and IFN-beta). The sequence is that of Protein E7 from Human papillomavirus 33.